The sequence spans 112 residues: Large ribosomal subunit protein bL21 (112 aa).

This sequence belongs to the bacterial ribosomal protein bL21 family. As to quaternary structure, part of the 50S ribosomal subunit. Contacts protein L20.

In terms of biological role, this protein binds to 23S rRNA in the presence of protein L20. The chain is Large ribosomal subunit protein bL21 from Buchnera aphidicola subsp. Baizongia pistaciae (strain Bp).